Here is a 337-residue protein sequence, read N- to C-terminus: Phosphoribosylformylglycinamidine cyclo-ligase (337 aa).

Belongs to the AIR synthase family.

It localises to the cytoplasm. It carries out the reaction 2-formamido-N(1)-(5-O-phospho-beta-D-ribosyl)acetamidine + ATP = 5-amino-1-(5-phospho-beta-D-ribosyl)imidazole + ADP + phosphate + H(+). It functions in the pathway purine metabolism; IMP biosynthesis via de novo pathway; 5-amino-1-(5-phospho-D-ribosyl)imidazole from N(2)-formyl-N(1)-(5-phospho-D-ribosyl)glycinamide: step 2/2. In Pseudothermotoga lettingae (strain ATCC BAA-301 / DSM 14385 / NBRC 107922 / TMO) (Thermotoga lettingae), this protein is Phosphoribosylformylglycinamidine cyclo-ligase.